A 356-amino-acid polypeptide reads, in one-letter code: Nucleotide-binding protein GDI1189/Gdia_1902 (356 aa).

20 to 27 (GLSGAGKS) lines the ATP pocket. Position 65–68 (65–68 (DSRT)) interacts with GTP. Residues 285–313 (EPGGTCDSPGKPAHIEKGAAPTDVQSGGA) are disordered.

This sequence belongs to the RapZ-like family.

Its function is as follows. Displays ATPase and GTPase activities. The polypeptide is Nucleotide-binding protein GDI1189/Gdia_1902 (Gluconacetobacter diazotrophicus (strain ATCC 49037 / DSM 5601 / CCUG 37298 / CIP 103539 / LMG 7603 / PAl5)).